A 2009-amino-acid chain; its full sequence is Rootletin (2009 aa).

Coiled coils occupy residues 74-265 and 346-438; these read EMAS…VTSD and ASLH…LRLQ. Disordered stretches follow at residues 462–519, 575–594, 636–665, 1180–1225, and 1448–1501; these read ALSD…CSDS, RDQT…EAQR, ELKR…LERS, EAQR…ELRS, and GRVS…EAVR. A compositionally biased stretch (polar residues) spans 463–484; sequence LSDTESGVQLSSSERTADTSDG. Coiled-coil stretches lie at residues 550–1058 and 1091–1439; these read LGSV…LLAE and LEME…GLRS. A compositionally biased stretch (low complexity) spans 577–586; the sequence is QTAASAQAQE. Residues 656 to 665 show a composition bias toward basic and acidic residues; the sequence is ARARRELERS. S1453, S1463, and S1469 each carry phosphoserine. Residue Y1475 is modified to Phosphotyrosine. Phosphoserine occurs at positions 1476, 1479, 1483, 1489, and 1568. The span at 1479–1494 shows a compositional bias: pro residues; sequence SQPPSPGLIASPAPPD. 2 coiled-coil regions span residues 1498-1697 and 1744-1998; these read EAVR…GTLQ and HLQK…RSSA. The tract at residues 1957-2009 is disordered; sequence QVQTERTLEARERAHRQRVSGLEEQVSTLKAQLHQELRRSSASVSLPPGTPEK.

Belongs to the rootletin family. In terms of assembly, homomer. Interacts with KLC3, NEK2 and the N-terminus of CEP250. Interacts with CEP44. In terms of processing, phosphorylated by NEK2 which may regulate its association with centrosomes. Highest expression detected in photoreceptor cells of retina. Expressed at lower levels in brain, trachea and kidney. Detected in all major ciliated epithelia. During embryonic development, enriched along the apical domains of neuroepithelium in brain ventricular zone, in primordia of retinal pigment epithelia and in neural retina.

It is found in the cytoplasm. The protein resides in the cytoskeleton. It localises to the microtubule organizing center. Its subcellular location is the centrosome. The protein localises to the centriole. It is found in the cilium basal body. Its function is as follows. Major structural component of the ciliary rootlet, a cytoskeletal-like structure in ciliated cells which originates from the basal body at the proximal end of a cilium and extends proximally toward the cell nucleus. Furthermore, is required for the correct positioning of the cilium basal body relative to the cell nucleus, to allow for ciliogenesis. Contributes to centrosome cohesion before mitosis. The protein is Rootletin of Mus musculus (Mouse).